A 1004-amino-acid chain; its full sequence is Outer cell wall protein (1004 aa).

The first 24 residues, 1-24, serve as a signal peptide directing secretion; it reads MNKKVVLSVLSTTLVASVAASAFA.

The outer cell wall layer is composed of subunits of the outer cell wall protein. These proteins form a hexagonal array with a lattice constant of 14.5 nm in the outer cell wall layers.

It is found in the secreted. The protein localises to the cell wall. The protein resides in the S-layer. The outer wall protein binds to the middle cell wall protein. The polypeptide is Outer cell wall protein (Brevibacillus brevis (strain 47 / JCM 6285 / NBRC 100599)).